A 766-amino-acid chain; its full sequence is Phosphoribosylformylglycinamidine synthase subunit PurL (766 aa).

Histidine 66 is a catalytic residue. The ATP site is built by tyrosine 69 and lysine 113. Glutamate 115 contacts Mg(2+). Substrate is bound by residues 116–119 and arginine 138; that span reads SHNH. Catalysis depends on histidine 117, which acts as the Proton acceptor. Aspartate 139 is a Mg(2+) binding site. Glutamine 264 is a binding site for substrate. Aspartate 292 is a binding site for Mg(2+). Residue 336-338 coordinates substrate; it reads ESQ. 2 residues coordinate ATP: asparagine 524 and glycine 561. Asparagine 562 is a binding site for Mg(2+). Serine 564 provides a ligand contact to substrate.

It belongs to the FGAMS family. As to quaternary structure, monomer. Part of the FGAM synthase complex composed of 1 PurL, 1 PurQ and 2 PurS subunits.

Its subcellular location is the cytoplasm. The catalysed reaction is N(2)-formyl-N(1)-(5-phospho-beta-D-ribosyl)glycinamide + L-glutamine + ATP + H2O = 2-formamido-N(1)-(5-O-phospho-beta-D-ribosyl)acetamidine + L-glutamate + ADP + phosphate + H(+). The protein operates within purine metabolism; IMP biosynthesis via de novo pathway; 5-amino-1-(5-phospho-D-ribosyl)imidazole from N(2)-formyl-N(1)-(5-phospho-D-ribosyl)glycinamide: step 1/2. Functionally, part of the phosphoribosylformylglycinamidine synthase complex involved in the purines biosynthetic pathway. Catalyzes the ATP-dependent conversion of formylglycinamide ribonucleotide (FGAR) and glutamine to yield formylglycinamidine ribonucleotide (FGAM) and glutamate. The FGAM synthase complex is composed of three subunits. PurQ produces an ammonia molecule by converting glutamine to glutamate. PurL transfers the ammonia molecule to FGAR to form FGAM in an ATP-dependent manner. PurS interacts with PurQ and PurL and is thought to assist in the transfer of the ammonia molecule from PurQ to PurL. This Mycobacterium bovis (strain BCG / Pasteur 1173P2) protein is Phosphoribosylformylglycinamidine synthase subunit PurL.